The following is a 188-amino-acid chain: Acireductone dioxygenase (188 aa).

Fe(2+)-binding residues include His-97, His-99, Glu-103, and His-141. Residues His-97, His-99, Glu-103, and His-141 each coordinate Ni(2+).

The protein belongs to the acireductone dioxygenase (ARD) family. As to quaternary structure, monomer. Fe(2+) serves as cofactor. Ni(2+) is required as a cofactor.

The enzyme catalyses 1,2-dihydroxy-5-(methylsulfanyl)pent-1-en-3-one + O2 = 3-(methylsulfanyl)propanoate + CO + formate + 2 H(+). It carries out the reaction 1,2-dihydroxy-5-(methylsulfanyl)pent-1-en-3-one + O2 = 4-methylsulfanyl-2-oxobutanoate + formate + 2 H(+). Its pathway is amino-acid biosynthesis; L-methionine biosynthesis via salvage pathway; L-methionine from S-methyl-5-thio-alpha-D-ribose 1-phosphate: step 5/6. Its function is as follows. Catalyzes 2 different reactions between oxygen and the acireductone 1,2-dihydroxy-3-keto-5-methylthiopentene (DHK-MTPene) depending upon the metal bound in the active site. Fe-containing acireductone dioxygenase (Fe-ARD) produces formate and 2-keto-4-methylthiobutyrate (KMTB), the alpha-ketoacid precursor of methionine in the methionine recycle pathway. Ni-containing acireductone dioxygenase (Ni-ARD) produces methylthiopropionate, carbon monoxide and formate, and does not lie on the methionine recycle pathway. The sequence is that of Acireductone dioxygenase from Xylella fastidiosa (strain 9a5c).